The sequence spans 143 residues: SsrA-binding protein (143 aa).

Belongs to the SmpB family.

It is found in the cytoplasm. Its function is as follows. Required for rescue of stalled ribosomes mediated by trans-translation. Binds to transfer-messenger RNA (tmRNA), required for stable association of tmRNA with ribosomes. tmRNA and SmpB together mimic tRNA shape, replacing the anticodon stem-loop with SmpB. tmRNA is encoded by the ssrA gene; the 2 termini fold to resemble tRNA(Ala) and it encodes a 'tag peptide', a short internal open reading frame. During trans-translation Ala-aminoacylated tmRNA acts like a tRNA, entering the A-site of stalled ribosomes, displacing the stalled mRNA. The ribosome then switches to translate the ORF on the tmRNA; the nascent peptide is terminated with the 'tag peptide' encoded by the tmRNA and targeted for degradation. The ribosome is freed to recommence translation, which seems to be the essential function of trans-translation. This is SsrA-binding protein from Deinococcus geothermalis (strain DSM 11300 / CIP 105573 / AG-3a).